Reading from the N-terminus, the 434-residue chain is Alpha-enolase (434 aa).

Serine 2 bears the N-acetylserine mark. Lysine 5 carries the N6-acetyllysine modification. Mg(2+) is bound at residue serine 40. At tyrosine 44 the chain carries Phosphotyrosine. The residue at position 60 (lysine 60) is an N6-acetyllysine; alternate. Lysine 60 carries the N6-succinyllysine; alternate modification. N6-acetyllysine occurs at positions 64 and 71. Lysine 89 bears the N6-acetyllysine; alternate mark. Lysine 89 is modified (N6-succinyllysine; alternate). N6-acetyllysine is present on residues lysine 92 and lysine 126. The substrate site is built by histidine 158 and glutamate 167. N6-acetyllysine occurs at positions 193 and 199. The residue at position 202 (lysine 202) is an N6-acetyllysine; alternate. A Glycyl lysine isopeptide (Lys-Gly) (interchain with G-Cter in SUMO2); alternate cross-link involves residue lysine 202. The active-site Proton donor is glutamate 210. N6-acetyllysine; alternate is present on residues lysine 228 and lysine 233. N6-succinyllysine; alternate is present on lysine 228. Lysine 228 bears the N6-(2-hydroxyisobutyryl)lysine; alternate mark. An N6-malonyllysine; alternate modification is found at lysine 233. Mg(2+) is bound at residue aspartate 245. Serine 254 carries the phosphoserine modification. At lysine 256 the chain carries N6-acetyllysine. Position 263 is a phosphoserine (serine 263). Lysine 281 bears the N6-acetyllysine; alternate mark. At lysine 281 the chain carries N6-(2-hydroxyisobutyryl)lysine; alternate. Position 287 is a phosphotyrosine (tyrosine 287). Position 291 is a phosphoserine (serine 291). Residues glutamate 293 and aspartate 318 each coordinate Mg(2+). Substrate contacts are provided by glutamate 293 and aspartate 318. Lysine 335 and lysine 343 each carry N6-acetyllysine. The active-site Proton acceptor is the lysine 343. Residues 370–373 and lysine 394 each bind substrate; that span reads SHRS. The segment at 405–434 is required for interaction with PLG; it reads AKYNQILRIEEELGSKAKFAGRSFRNPLAK. Residue lysine 406 is modified to N6-acetyllysine. The residue at position 420 (lysine 420) is an N6-acetyllysine; alternate. Lysine 420 carries the post-translational modification N6-succinyllysine; alternate. Lysine 420 carries the N6-malonyllysine; alternate modification.

The protein belongs to the enolase family. In terms of assembly, mammalian enolase is composed of 3 isozyme subunits, alpha, beta and gamma, which can form homodimers or heterodimers which are cell-type and development-specific. ENO1 interacts with PLG in the neuronal plasma membrane and promotes its activation. The C-terminal lysine is required for this binding. Interacts with ENO4 and PGAM2. Interacts with CMTM6. Mg(2+) serves as cofactor. ISGylated. In terms of processing, lysine 2-hydroxyisobutyrylation (Khib) by p300/EP300 activates the phosphopyruvate hydratase activity. In terms of tissue distribution, the alpha/alpha homodimer is expressed in embryo and in most adult tissues. The alpha/beta heterodimer and the beta/beta homodimer are found in striated muscle, and the alpha/gamma heterodimer and the gamma/gamma homodimer in neurons.

It localises to the cytoplasm. The protein resides in the cell membrane. It carries out the reaction (2R)-2-phosphoglycerate = phosphoenolpyruvate + H2O. The protein operates within carbohydrate degradation; glycolysis; pyruvate from D-glyceraldehyde 3-phosphate: step 4/5. Glycolytic enzyme the catalyzes the conversion of 2-phosphoglycerate to phosphoenolpyruvate. In addition to glycolysis, involved in various processes such as growth control, hypoxia tolerance and allergic responses. May also function in the intravascular and pericellular fibrinolytic system due to its ability to serve as a receptor and activator of plasminogen on the cell surface of several cell-types such as leukocytes and neurons. Stimulates immunoglobulin production. The chain is Alpha-enolase (ENO1) from Bos taurus (Bovine).